A 165-amino-acid chain; its full sequence is Regulator of ribonuclease activity A (165 aa).

It belongs to the RraA family. In terms of assembly, homotrimer. Binds to both RNA-binding sites in the C-terminal region of Rne and to RhlB.

It localises to the cytoplasm. Globally modulates RNA abundance by binding to RNase E (Rne) and regulating its endonucleolytic activity. Can modulate Rne action in a substrate-dependent manner by altering the composition of the degradosome. Modulates RNA-binding and helicase activities of the degradosome. The sequence is that of Regulator of ribonuclease activity A from Haemophilus ducreyi (strain 35000HP / ATCC 700724).